A 600-amino-acid polypeptide reads, in one-letter code: Chaperone protein DnaK (600 aa).

Threonine 175 is subject to Phosphothreonine; by autocatalysis. The segment covering 569–578 has biased composition (low complexity); sequence SFAQATAQQA. The disordered stretch occupies residues 569–600; it reads SFAQATAQQANTSESDPKADDSNTIDAEIKQD. Over residues 583-600 the composition is skewed to basic and acidic residues; that stretch reads SDPKADDSNTIDAEIKQD.

It belongs to the heat shock protein 70 family.

In terms of biological role, acts as a chaperone. In Mesomycoplasma hyopneumoniae (strain 7448) (Mycoplasma hyopneumoniae), this protein is Chaperone protein DnaK.